Here is a 452-residue protein sequence, read N- to C-terminus: Asparagine--tRNA ligase (452 aa).

It belongs to the class-II aminoacyl-tRNA synthetase family. As to quaternary structure, homodimer.

It is found in the cytoplasm. The enzyme catalyses tRNA(Asn) + L-asparagine + ATP = L-asparaginyl-tRNA(Asn) + AMP + diphosphate + H(+). This is Asparagine--tRNA ligase from Mycoplasma mycoides subsp. mycoides SC (strain CCUG 32753 / NCTC 10114 / PG1).